The primary structure comprises 279 residues: uncharacterized protein (279 aa).

A signal peptide spans 1–31 (MLVQSRTLVTAILSCSLVFGTTVNGASVAIA).

This is an uncharacterized protein from Corynebacterium glutamicum (strain ATCC 13032 / DSM 20300 / JCM 1318 / BCRC 11384 / CCUG 27702 / LMG 3730 / NBRC 12168 / NCIMB 10025 / NRRL B-2784 / 534).